The sequence spans 96 residues: Co-chaperonin GroES (96 aa).

This sequence belongs to the GroES chaperonin family. Heptamer of 7 subunits arranged in a ring. Interacts with the chaperonin GroEL.

The protein localises to the cytoplasm. Its function is as follows. Together with the chaperonin GroEL, plays an essential role in assisting protein folding. The GroEL-GroES system forms a nano-cage that allows encapsulation of the non-native substrate proteins and provides a physical environment optimized to promote and accelerate protein folding. GroES binds to the apical surface of the GroEL ring, thereby capping the opening of the GroEL channel. The sequence is that of Co-chaperonin GroES from Nitrosococcus oceani (strain ATCC 19707 / BCRC 17464 / JCM 30415 / NCIMB 11848 / C-107).